Here is a 424-residue protein sequence, read N- to C-terminus: Tyrosine--tRNA ligase (424 aa).

Tyr-37 provides a ligand contact to L-tyrosine. Residues 42-51 carry the 'HIGH' region motif; that stretch reads PTADSLHLGH. L-tyrosine is bound by residues Tyr-175 and Gln-179. The 'KMSKS' region motif lies at 235 to 239; sequence KFGKT. Lys-238 lines the ATP pocket. An S4 RNA-binding domain is found at 357–414; the sequence is ADLQQALVAAELVPSRGQARTLISSNAVSVNGEKQASIDYVFDDADRLYSRYTLLRRG.

The protein belongs to the class-I aminoacyl-tRNA synthetase family. TyrS type 1 subfamily. Homodimer.

The protein localises to the cytoplasm. It carries out the reaction tRNA(Tyr) + L-tyrosine + ATP = L-tyrosyl-tRNA(Tyr) + AMP + diphosphate + H(+). In terms of biological role, catalyzes the attachment of tyrosine to tRNA(Tyr) in a two-step reaction: tyrosine is first activated by ATP to form Tyr-AMP and then transferred to the acceptor end of tRNA(Tyr). The polypeptide is Tyrosine--tRNA ligase (Sodalis glossinidius (strain morsitans)).